We begin with the raw amino-acid sequence, 100 residues long: Small ribosomal subunit protein uS14c (100 aa).

The protein belongs to the universal ribosomal protein uS14 family. Part of the 30S ribosomal subunit.

It is found in the plastid. The protein localises to the chloroplast. Binds 16S rRNA, required for the assembly of 30S particles. The protein is Small ribosomal subunit protein uS14c of Nephroselmis olivacea (Green alga).